A 549-amino-acid chain; its full sequence is FERM domain-containing protein 1 (549 aa).

The disordered stretch occupies residues 1-40 (MAVPPRGRGIDPARTNPDTFPPSGARCMEPSPERPACSQQ). In terms of domain architecture, FERM spans 54-369 (RDVLVLLPSR…DELELDLASR (316 aa)). 2 disordered regions span residues 377 to 400 (SSQH…YTSG) and 422 to 464 (HGLH…GQSA). A compositionally biased stretch (low complexity) spans 430 to 443 (SSSPRTSRSHPSTR). A compositionally biased stretch (polar residues) spans 444 to 462 (GDSQATRQEPCTQVRTRGQ).

The chain is FERM domain-containing protein 1 (FRMD1) from Homo sapiens (Human).